The sequence spans 106 residues: ATP-dependent Clp protease adapter protein ClpS (106 aa).

Residues 1–10 (MSQKTVHDQD) are compositionally biased toward basic and acidic residues. The segment at 1–23 (MSQKTVHDQDNALLLETGNTKVA) is disordered.

The protein belongs to the ClpS family. As to quaternary structure, binds to the N-terminal domain of the chaperone ClpA.

Its function is as follows. Involved in the modulation of the specificity of the ClpAP-mediated ATP-dependent protein degradation. This is ATP-dependent Clp protease adapter protein ClpS from Xylella fastidiosa (strain M23).